We begin with the raw amino-acid sequence, 349 residues long: Hydroxymethylglutaryl-CoA synthase (349 aa).

Residues Asp-30 and Ala-31 each coordinate (3S)-3-hydroxy-3-methylglutaryl-CoA. The Proton donor/acceptor role is filled by Glu-82. 2 residues coordinate (3S)-3-hydroxy-3-methylglutaryl-CoA: Cys-114 and Thr-155. Cys-114 (acyl-thioester intermediate) is an active-site residue. Arg-203 serves as a coordination point for CoA. (3S)-3-hydroxy-3-methylglutaryl-CoA-binding residues include Thr-205 and His-238. Catalysis depends on His-238, which acts as the Proton donor/acceptor. Lys-243 lines the CoA pocket. The (3S)-3-hydroxy-3-methylglutaryl-CoA site is built by Asn-270 and Ser-300.

The protein belongs to the thiolase-like superfamily. Archaeal HMG-CoA synthase family. Interacts with acetoacetyl-CoA thiolase that catalyzes the precedent step in the pathway and with a DUF35 protein. The acetoacetyl-CoA thiolase/HMG-CoA synthase complex channels the intermediate via a fused CoA-binding site, which allows for efficient coupling of the endergonic thiolase reaction with the exergonic HMGCS reaction.

The catalysed reaction is acetoacetyl-CoA + acetyl-CoA + H2O = (3S)-3-hydroxy-3-methylglutaryl-CoA + CoA + H(+). It participates in metabolic intermediate biosynthesis; (R)-mevalonate biosynthesis; (R)-mevalonate from acetyl-CoA: step 2/3. Catalyzes the condensation of acetyl-CoA with acetoacetyl-CoA to form 3-hydroxy-3-methylglutaryl-CoA (HMG-CoA). Functions in the mevalonate (MVA) pathway leading to isopentenyl diphosphate (IPP), a key precursor for the biosynthesis of isoprenoid compounds that are building blocks of archaeal membrane lipids. The polypeptide is Hydroxymethylglutaryl-CoA synthase (Methanococcus maripaludis (strain C6 / ATCC BAA-1332)).